A 197-amino-acid chain; its full sequence is Negative modulator of initiation of replication (197 aa).

It belongs to the SeqA family. Homodimer. Polymerizes to form helical filaments.

Its subcellular location is the cytoplasm. Negative regulator of replication initiation, which contributes to regulation of DNA replication and ensures that replication initiation occurs exactly once per chromosome per cell cycle. Binds to pairs of hemimethylated GATC sequences in the oriC region, thus preventing assembly of replication proteins and re-initiation at newly replicated origins. Repression is relieved when the region becomes fully methylated. In Pseudoalteromonas translucida (strain TAC 125), this protein is Negative modulator of initiation of replication.